The sequence spans 163 residues: Small ribosomal subunit protein uS7 (163 aa).

The protein belongs to the universal ribosomal protein uS7 family. As to quaternary structure, part of the 30S ribosomal subunit. Contacts proteins S9 and S11.

In terms of biological role, one of the primary rRNA binding proteins, it binds directly to 16S rRNA where it nucleates assembly of the head domain of the 30S subunit. Is located at the subunit interface close to the decoding center, probably blocks exit of the E-site tRNA. This Rickettsia bellii (strain RML369-C) protein is Small ribosomal subunit protein uS7.